Consider the following 838-residue polypeptide: MKVSRRAFIKQTAAAATASVAGVTLPAGAANLVTDKELTQLKWSKAPCRFCGTGCGVEVAVKDNRVVATQGDPKAEVNRGLNCVKGYFLSKIMYGKDRLTQPLLRMKNGKYDKNGEFTPVTWDRAFDEMAMQFKRVIKEKGPTAVGMFGSGQWTVFEGYAAVKLMKAGFRSNNLDPNARHCMASAVAGFMRTFGMDEPMGCYDDFEVADAFVLWGSNMAEMHPILWSRVTDRRLSAPKTKVAVLSTFTHRSFDLADIPIVFTPQADLAMLNYIANYIITNKKVNTDFVNKHTVFKQGVTDIGYGLRPDNPVQKAAKNADKVGDSKPISFDEFAKFVSTYDLDYTTKLANPDKSKEKEFKQQLQKLAELYADPKIKVVSFWTMGFNQHTRGTWANNMIYNLHLLTGKIATPGNSPFSLTGQPSACGTAREVGTFSHRLPADMVVTNPKHREEAEHIWKLPAGTIPEKPGYHAVLQNRMLKDGKLNAYWVQVNNNMQAGANINEEGYPGYRNPANFIVVSDVYPTVTALAADLILPSAMWVEKEGAYGNAERRTQFWHQLVDAPGEARSDLWQLVEFSKRFKVEEVWPEDLIAKKPELRGKTLYDVLYRNGNVDRFPLKDVDPEYNNAEAKAFGFYLQKGLFEEYASFGRGHGHDLAPFDDYHKARGLRWPVVNGKETRWRYKEGSDPYVKAGTGYQFYGNPDGKAVIFALPYEAPPEVPDKEYPFWLSTGRVLEHWHSGSMTRRVPELYRAFPNAVCFMHPEDANALGLRRGVEVEVISRRGKMRTRIETRGRNQPPKGLVFVPWFDASQLINKVTLDATCPISLQTDFKKCAVKIVKV.

A signal peptide (tat-type signal) is located at residues 1-29 (MKVSRRAFIKQTAAAATASVAGVTLPAGA). Residues 41–97 (LKWSKAPCRFCGTGCGVEVAVKDNRVVATQGDPKAEVNRGLNCVKGYFLSKIMYGKD) form the 4Fe-4S Mo/W bis-MGD-type domain. [4Fe-4S] cluster-binding residues include Cys-48, Cys-51, Cys-55, and Cys-83. Residues Lys-85, Gln-152, Asn-177, Cys-181, 214 to 221 (WGSNMAEM), 245 to 249 (STFTH), Met-382, Gln-386, Asn-492, 518 to 519 (SD), Lys-541, Asp-568, and 728 to 737 (TGRVLEHWHS) contribute to the Mo-bis(molybdopterin guanine dinucleotide) site. A substrate-binding site is contributed by Trp-804. Mo-bis(molybdopterin guanine dinucleotide)-binding residues include Asn-812 and Lys-829.

It belongs to the prokaryotic molybdopterin-containing oxidoreductase family. NasA/NapA/NarB subfamily. As to quaternary structure, component of the periplasmic nitrate reductase NapAB complex composed of NapA and NapB. Requires [4Fe-4S] cluster as cofactor. Mo-bis(molybdopterin guanine dinucleotide) is required as a cofactor. In terms of processing, predicted to be exported by the Tat system. The position of the signal peptide cleavage has not been experimentally proven.

It is found in the periplasm. The enzyme catalyses 2 Fe(II)-[cytochrome] + nitrate + 2 H(+) = 2 Fe(III)-[cytochrome] + nitrite + H2O. In terms of biological role, catalytic subunit of the periplasmic nitrate reductase complex NapAB. Receives electrons from NapB and catalyzes the reduction of nitrate to nitrite. The sequence is that of Periplasmic nitrate reductase from Ralstonia pickettii (strain 12J).